A 462-amino-acid polypeptide reads, in one-letter code: NEDD8-activating enzyme E1 catalytic subunit (462 aa).

A2 carries the N-acetylalanine modification. Residues 53-70 (HPDFEPSTESLQFLLDTC) form an interaction with UBE2M N-terminus region. Residues 100–124 (DMDT…GRPK) and 148–171 (IQDF…SIIA) each bind ATP. 2 interaction with UBE2M N-terminus regions span residues 157–161 (RQFHI) and 192–217 (PSSI…LPGM). Residues 227–229 (LYP) form an interaction with NEDD8 region. The Glycyl thioester intermediate role is filled by C237. Interaction with NAE1 stretches follow at residues 242–248 (MPRLPEH) and 292–295 (YNIR). The segment at 331–338 (IATSAYIP) is interaction with UBE2M N-terminus. Residues 352 to 357 (YTYTFE) are interaction with NEDD8. Positions 368–462 (SQLPQNIQFS…QTVLFKLHFT (95 aa)) are interaction with UBE2M core domain.

Belongs to the ubiquitin-activating E1 family. UBA3 subfamily. Heterodimer of UBA3 and NAE1. Interacts with NEDD8, UBE2F and UBE2M. Binds ESR1 and ESR2 with bound steroid ligand. Interacts with TBATA.

The catalysed reaction is ATP + [NEDD8 protein] + [E1 NEDD8-activating enzyme]-L-cysteine = AMP + diphosphate + [E1 NEDD8-activating enzyme]-S-[NEDD8 protein]-yl-L-cysteine.. Its pathway is protein modification; protein neddylation. Its activity is regulated as follows. Binding of TP53BP2 to the regulatory subunit NAE1 decreases activity. Its function is as follows. Catalytic subunit of the dimeric UBA3-NAE1 E1 enzyme. E1 activates NEDD8 by first adenylating its C-terminal glycine residue with ATP, thereafter linking this residue to the side chain of the catalytic cysteine, yielding a NEDD8-UBA3 thioester and free AMP. E1 finally transfers NEDD8 to the catalytic cysteine of UBE2M. Down-regulates steroid receptor activity. Necessary for cell cycle progression. In Mus musculus (Mouse), this protein is NEDD8-activating enzyme E1 catalytic subunit (Uba3).